Reading from the N-terminus, the 437-residue chain is Triacylglycerol lipase (437 aa).

Residues 1–100 enclose the PE domain; that stretch reads MVSYVVALPE…AELANASLLQ (100 aa). Positions 101–206 are linker; sequence SEFASGIGNG…GNSPPPLLNS (106 aa). The segment at 207-437 is lipase; the sequence is LLGQTVQYTT…QINQQLGIAA (231 aa). Positions 239–241 match the Involved in the stabilization of the negatively charged intermediate by the formation of the oxyanion hole motif; the sequence is HGG. Catalysis depends on residues serine 309, aspartate 383, and histidine 413.

This sequence in the N-terminal section; belongs to the mycobacterial PE family. PGRS subfamily. The protein in the C-terminal section; belongs to the 'GDXG' lipolytic enzyme family. In terms of assembly, forms aggregates via its PE domain. In terms of processing, upon export, the PE domain is removed by proteolytic cleavage. Cleavage occurs at the cell surface and is not required for secretion. Cleaved after Gly-149 by the aspartic protease PecA. May also be cleaved before Leu-98 and after Ala-136.

The protein resides in the cytoplasm. It is found in the secreted. Its subcellular location is the cell wall. It localises to the cell surface. It catalyses the reaction a triacylglycerol + H2O = a diacylglycerol + a fatty acid + H(+). The enzyme catalyses 1,2,3-tri-(9Z-octadecenoyl)-glycerol + H2O = di-(9Z)-octadecenoylglycerol + (9Z)-octadecenoate + H(+). It carries out the reaction an acetyl ester + H2O = an aliphatic alcohol + acetate + H(+). The catalysed reaction is a butanoate ester + H2O = an aliphatic alcohol + butanoate + H(+). It catalyses the reaction a hexanoate ester + H2O = an aliphatic alcohol + hexanoate + H(+). The enzyme catalyses an octanoate ester + H2O = an aliphatic alcohol + octanoate + H(+). It carries out the reaction a dodecanoate ester + H2O = an aliphatic alcohol + dodecanoate + H(+). The catalysed reaction is a tetradecanoate ester + H2O = an aliphatic alcohol + tetradecanoate + H(+). It catalyses the reaction hexadecanoate ester + H2O = an aliphatic alcohol + hexadecanoate + H(+). The enzyme catalyses octadecanoate ester + H2O = an aliphatic alcohol + octadecanoate + H(+). It carries out the reaction 1-butyrylglycerol + H2O = butanoate + glycerol + H(+). The catalysed reaction is 1,2,3-tributanoylglycerol + H2O = dibutanoylglycerol + butanoate + H(+). Its activity is regulated as follows. PE domain down-regulates lipase activity. With respect to regulation, cleavage by PecA does not affect surface localization and lipase activity. Inhibited by diethyl-p-nitrophenyl phosphate (E-600) at 0.5 uM, by phenylmethanesulfonyl fluoride at 5 mM and by polyethylene glycol sorbitan monolaurate (Tween 20). Also inhibited by CaCl(2), CoCl(2), MnCl(2), ZnCl(2) and MgCl(2). Inhibited by several hydrazides compounds. Stimulated slightly by SDS at concentrations up to 2 mM, above which the activity is severely inhibited. Functionally, catalyzes the hydrolysis of both intracellular and extracellular triacylglycerol (TAG). In vitro, can also hydrolyze p-nitrophenyl (pNP) esters with various chain lengths, including pNP-acetate (C2), pNP-butyrate (C4), pNP-caproate (C6), pNP-caprylate (C8), pNP-laurate (C12), pNP-myristate (C14), pNP-palmitate (C16) and pNP-stearate (C18). Also hydrolyzes monobutyrin, tributyrin and trioctanoin. Overexpression results in increase of virulence characterized by reduced survival of infected mouse and increased burden of bacilli in the lungs. Hydrolyzes internal or host-derived TAG depending on its localization. Hydrolyzes TAG that accumulates within mycobacterial intracytosolic lipid inclusions (ILI). Probably responsible for the utilization of stored long-chain TAG during the dormancy and reactivation stages of the pathogen. In terms of biological role, hydrolyzes host-derived TAG. This chain is Triacylglycerol lipase, found in Mycobacterium tuberculosis (strain ATCC 25618 / H37Rv).